We begin with the raw amino-acid sequence, 174 residues long: Calcineurin subunit B (174 aa).

EF-hand domains lie at 21–56 (EEIERLRKRFMKLDKDGSGTIDKNEFLTIPGISSNP), 60–88 (RLMDVFDEDGNGTIDFQEFIMGLSAFSGK), 90–125 (SKLDKLKFAFKIYDIDRDGYIGNGELFIVMKMMVGK), and 131–166 (ELQQIVDKTMMEADEDGDGRLNFHEFKNAVDSKSVA). Ca(2+)-binding residues include Asp-34, Asp-36, Ser-38, Thr-40, Glu-45, Asp-66, Asp-68, Asn-70, Thr-72, Glu-77, Asp-103, Asp-105, Asp-107, Tyr-109, Glu-114, Asp-144, Asp-146, Asp-148, Arg-150, and Glu-155.

Belongs to the calcineurin regulatory subunit family. Composed of a catalytic subunit (A) and a regulatory subunit (B).

Its function is as follows. Regulatory subunit of calcineurin, a calcium-dependent, calmodulin stimulated protein phosphatase. Confers calcium sensitivity. This is Calcineurin subunit B (CNB1) from Debaryomyces hansenii (strain ATCC 36239 / CBS 767 / BCRC 21394 / JCM 1990 / NBRC 0083 / IGC 2968) (Yeast).